A 505-amino-acid chain; its full sequence is tRNA-2-methylthio-N(6)-dimethylallyladenosine synthase (505 aa).

The 119-residue stretch at 14-132 (RTYEVRTYGC…LPVLLERARV (119 aa)) folds into the MTTase N-terminal domain. [4Fe-4S] cluster is bound by residues C23, C61, C95, C169, C173, and C176. Residues 155–386 (RESAYAAWVS…ALQEEISWEE (232 aa)) enclose the Radical SAM core domain. The region spanning 388–456 (KKQVGRTLEL…PHHLLAEGPV (69 aa)) is the TRAM domain.

Belongs to the methylthiotransferase family. MiaB subfamily. In terms of assembly, monomer. It depends on [4Fe-4S] cluster as a cofactor.

It is found in the cytoplasm. It catalyses the reaction N(6)-dimethylallyladenosine(37) in tRNA + (sulfur carrier)-SH + AH2 + 2 S-adenosyl-L-methionine = 2-methylsulfanyl-N(6)-dimethylallyladenosine(37) in tRNA + (sulfur carrier)-H + 5'-deoxyadenosine + L-methionine + A + S-adenosyl-L-homocysteine + 2 H(+). Its function is as follows. Catalyzes the methylthiolation of N6-(dimethylallyl)adenosine (i(6)A), leading to the formation of 2-methylthio-N6-(dimethylallyl)adenosine (ms(2)i(6)A) at position 37 in tRNAs that read codons beginning with uridine. This chain is tRNA-2-methylthio-N(6)-dimethylallyladenosine synthase, found in Streptomyces viridosporus (strain ATCC 14672 / DSM 40746 / JCM 4963 / KCTC 9882 / NRRL B-12104 / FH 1290) (Streptomyces ghanaensis).